The following is a 428-amino-acid chain: Dihydroorotase (428 aa).

Zn(2+)-binding residues include His59 and His61. Residues 61-63 (HLR) and Asn93 each bind substrate. The Zn(2+) site is built by Asp151, His178, and His231. Asn277 contacts substrate. Residue Asp304 participates in Zn(2+) binding. Asp304 is a catalytic residue. Residues His308 and 322–323 (FG) contribute to the substrate site.

It belongs to the metallo-dependent hydrolases superfamily. DHOase family. Class I DHOase subfamily. Zn(2+) is required as a cofactor.

The enzyme catalyses (S)-dihydroorotate + H2O = N-carbamoyl-L-aspartate + H(+). It functions in the pathway pyrimidine metabolism; UMP biosynthesis via de novo pathway; (S)-dihydroorotate from bicarbonate: step 3/3. In terms of biological role, catalyzes the reversible cyclization of carbamoyl aspartate to dihydroorotate. In Bacillus pumilus (strain SAFR-032), this protein is Dihydroorotase.